A 170-amino-acid chain; its full sequence is Adenine phosphoribosyltransferase (170 aa).

Belongs to the purine/pyrimidine phosphoribosyltransferase family. As to quaternary structure, homodimer.

The protein localises to the cytoplasm. It carries out the reaction AMP + diphosphate = 5-phospho-alpha-D-ribose 1-diphosphate + adenine. The protein operates within purine metabolism; AMP biosynthesis via salvage pathway; AMP from adenine: step 1/1. Catalyzes a salvage reaction resulting in the formation of AMP, that is energically less costly than de novo synthesis. The protein is Adenine phosphoribosyltransferase of Lactococcus lactis subsp. lactis (strain IL1403) (Streptococcus lactis).